Reading from the N-terminus, the 162-residue chain is Toluate 1,2-dioxygenase subunit beta (162 aa).

Belongs to the bacterial ring-hydroxylating dioxygenase beta subunit family. As to quaternary structure, this dioxygenase system consists of three proteins: the two subunits of the hydroxylase component (XylX and XylY), and an electron transfer component (XylZ).

The protein operates within xenobiotic degradation; toluene degradation. This is Toluate 1,2-dioxygenase subunit beta (xylY) from Pseudomonas putida (Arthrobacter siderocapsulatus).